A 248-amino-acid chain; its full sequence is 3-deoxy-manno-octulosonate cytidylyltransferase (248 aa).

Belongs to the KdsB family.

It localises to the cytoplasm. The catalysed reaction is 3-deoxy-alpha-D-manno-oct-2-ulosonate + CTP = CMP-3-deoxy-beta-D-manno-octulosonate + diphosphate. It functions in the pathway nucleotide-sugar biosynthesis; CMP-3-deoxy-D-manno-octulosonate biosynthesis; CMP-3-deoxy-D-manno-octulosonate from 3-deoxy-D-manno-octulosonate and CTP: step 1/1. It participates in bacterial outer membrane biogenesis; lipopolysaccharide biosynthesis. Activates KDO (a required 8-carbon sugar) for incorporation into bacterial lipopolysaccharide in Gram-negative bacteria. In Escherichia coli (strain K12 / MC4100 / BW2952), this protein is 3-deoxy-manno-octulosonate cytidylyltransferase.